The following is a 544-amino-acid chain: MAKEILFSDNARNRLYSGVEKLADAVKVTMGPRGRNVLLQKSFGAPTITKDGVSVAREIELKDTLENMGAQLVKEVASKTNDEAGDGTTTATVLAHSIFKEGLRNVTAGANPISLKRGMDKACEAILAELKKSSKVVANKTEIEQVATISANSDSAIGKMIAEAMDKVGKDGVITVEEAKGISDELDVVEGMQFDRGYLSPYFVTNPEKMIAEFNNPFILLYDKKISSLKEMLPILESVNQSGRPLVIIAEDVDGEALATLVVNRLRGSLHIAAVKAPGFGDRRKAMLEDIAVLTGGTVISEEMGMKLETAEFSCLGTASKIVIDKDNTTIVDGNGDNERVVARVNQIKAEISNTTSDYDREKLQERLAKLSGGVAVIKVGAATETEMKEKKDRVDDALSATRAAVEEGIVIGGGAALIKASKKVNLDLTGDERIGADIVLRAISAPLKQIAINAGFDAGVVANEVEKSSNENLGFNAATGEYVDMFEAGIVDPAKVERVAMQNAVSVASLLLTTEATVSDIKEDKPAMPSMPDMGGMGMPGMM.

ATP contacts are provided by residues threonine 29–proline 32, lysine 50, aspartate 86–threonine 90, glycine 414, asparagine 477–alanine 479, and aspartate 493. The disordered stretch occupies residues aspartate 525–methionine 544.

The protein belongs to the chaperonin (HSP60) family. Forms a cylinder of 14 subunits composed of two heptameric rings stacked back-to-back. Interacts with the co-chaperonin GroES.

It localises to the cytoplasm. The enzyme catalyses ATP + H2O + a folded polypeptide = ADP + phosphate + an unfolded polypeptide.. Together with its co-chaperonin GroES, plays an essential role in assisting protein folding. The GroEL-GroES system forms a nano-cage that allows encapsulation of the non-native substrate proteins and provides a physical environment optimized to promote and accelerate protein folding. This is Chaperonin GroEL from Aliarcobacter butzleri (strain RM4018) (Arcobacter butzleri).